Consider the following 102-residue polypeptide: Small ribosomal subunit protein uS10 (102 aa).

It belongs to the universal ribosomal protein uS10 family. Part of the 30S ribosomal subunit.

Its function is as follows. Involved in the binding of tRNA to the ribosomes. This Streptococcus thermophilus (strain ATCC BAA-250 / LMG 18311) protein is Small ribosomal subunit protein uS10.